We begin with the raw amino-acid sequence, 239 residues long: Ribosomal RNA small subunit methyltransferase G (239 aa).

Residues Gly78, Phe83, 129–130 (AE), and Arg148 contribute to the S-adenosyl-L-methionine site.

This sequence belongs to the methyltransferase superfamily. RNA methyltransferase RsmG family.

It localises to the cytoplasm. In terms of biological role, specifically methylates the N7 position of a guanine in 16S rRNA. This Clostridium botulinum (strain Eklund 17B / Type B) protein is Ribosomal RNA small subunit methyltransferase G.